The primary structure comprises 179 residues: MTNTERSSSWKASSIPDQPMWYFGYGSNMKASSMADRKVTPLSTKIVTVPTHFVTFDIFGIPYSEPSYASLEQFPDGGTGKLDLVHHISRTQVLPACGVAHLLSPNDFHRLLVTEGSGVVYNLVEVQAYEMNKDGQPIPAPFTVHTLKAKWPQRPNGTPSARYMVRFLGLLSSSTYYQY.

This sequence belongs to the class-I pyridoxal-phosphate-dependent aminotransferase family.

It catalyses the reaction an alpha-(gamma-L-glutamyl)-L-amino acid = 5-oxo-L-proline + an L-alpha-amino acid. Its pathway is mycotoxin biosynthesis. Functionally, gamma-glutamyl cyclotransferase; part of the gene cluster that mediates the biosynthesis of 11'-deoxyverticillin A, one of the dimeric epipolythiodioxopiperazines (ETPs) from the verticillin family that act as mycotoxins. 11'-deoxyverticillin A is required for normal conidiation. The nonribosomal peptide synthetase verP is speculated to be responsible for condensation of amino acids to form the carbon skeleton of verticillin, whereas the cluster-specific tailoring enzymes are involved in further modifications leading to the production of 11'-deoxyverticillin A. This is Gamma-glutamyl cyclotransferase verK from Clonostachys rogersoniana.